Reading from the N-terminus, the 465-residue chain is ATP synthase subunit beta 2 (465 aa).

Residue 148-155 (GGAGVGKT) coordinates ATP.

It belongs to the ATPase alpha/beta chains family. In terms of assembly, F-type ATPases have 2 components, CF(1) - the catalytic core - and CF(0) - the membrane proton channel. CF(1) has five subunits: alpha(3), beta(3), gamma(1), delta(1), epsilon(1). CF(0) has three main subunits: a(1), b(2) and c(9-12). The alpha and beta chains form an alternating ring which encloses part of the gamma chain. CF(1) is attached to CF(0) by a central stalk formed by the gamma and epsilon chains, while a peripheral stalk is formed by the delta and b chains.

Its subcellular location is the cell inner membrane. It catalyses the reaction ATP + H2O + 4 H(+)(in) = ADP + phosphate + 5 H(+)(out). In terms of biological role, produces ATP from ADP in the presence of a proton gradient across the membrane. The catalytic sites are hosted primarily by the beta subunits. The sequence is that of ATP synthase subunit beta 2 from Psychromonas ingrahamii (strain DSM 17664 / CCUG 51855 / 37).